A 627-amino-acid polypeptide reads, in one-letter code: MCGICCSVSFSIEHFSKELKEDLLHNLRRRGPNSSRQLLKSAVNYQCLFSGHVLHLRGVLTIQPVEDEHGNVFLWNGEVFNGVKVEAEDNDTQVMFNSLSACKNESEILLLFSKVQGPWSFIYYQASSHHLWFGRDFFGRRSLLWQFSNLGKSFCLSSVGTQVYGVADQWQEVPASGIFQIDLNSAAVSRSVILKLYPWRYISKEDIAEECGNDLTQTPAGLPEFVSVVINEANLYLSKPVVPLNKKLPESPLEIQCRNSSSTSGTRETLEVFLTDEHTKKIVQQFIAILNVSVKRRILCLAREENLASKEVLKTCSSKANIAILFSGGVDSMVIAALADRHIPLDEPIDLLNVAFVPKQKTGLPIPNIERKQQNHHEIPSEESSQSPAADEGPGEAEVPDRVTGKAGLKELQSVNPSRTWNFVEINVSLEELQKLRRARICHLVQPLDTVLDDSIGCAVWFASRGIGWLVTQDAVRSYKSSAKVILTGIGADEQLAGYSRHRARFQSLGLEGLNEEIAMELGRISSRNLGRDDRVIGDHGKEARFPFLDENVVSFLNSLPVWEKVDLTLPRGVGEKLILRLAAMELGLPASALLPKRAIQFGSRIAKLEKSNEKASDKCGRLQILP.

The For GATase activity role is filled by C2. The 183-residue stretch at 2–184 (CGICCSVSFS…ASGIFQIDLN (183 aa)) folds into the Glutamine amidotransferase type-2 domain. Residues 308-597 (ASKEVLKTCS…GLPASALLPK (290 aa)) form the Asparagine synthetase domain. The segment at 373–404 (QQNHHEIPSEESSQSPAADEGPGEAEVPDRVT) is disordered.

The polypeptide is Asparagine synthetase domain-containing protein 1 (Asnsd1) (Mus musculus (Mouse)).